A 395-amino-acid chain; its full sequence is Tryptophan--tRNA ligase, cytoplasmic (395 aa).

The 'HIGH' region signature appears at 91–100 (PSSDSMHLGH). A 'KMSKS' region motif is present at residues 275–279 (KMSAS). Thr-288 and Thr-290 each carry phosphothreonine.

Belongs to the class-I aminoacyl-tRNA synthetase family.

The protein resides in the cytoplasm. The enzyme catalyses tRNA(Trp) + L-tryptophan + ATP = L-tryptophyl-tRNA(Trp) + AMP + diphosphate + H(+). The chain is Tryptophan--tRNA ligase, cytoplasmic (wrs1) from Schizosaccharomyces pombe (strain 972 / ATCC 24843) (Fission yeast).